The chain runs to 406 residues: Cysteine desulfurase IscS (406 aa).

Pyridoxal 5'-phosphate contacts are provided by residues 75 to 76 (AT), asparagine 155, glutamine 183, and 203 to 205 (SSH). Lysine 206 carries the post-translational modification N6-(pyridoxal phosphate)lysine. Residue threonine 243 participates in pyridoxal 5'-phosphate binding. The Cysteine persulfide intermediate role is filled by cysteine 330. Residue cysteine 330 participates in [2Fe-2S] cluster binding.

This sequence belongs to the class-V pyridoxal-phosphate-dependent aminotransferase family. NifS/IscS subfamily. In terms of assembly, homodimer. Forms a heterotetramer with IscU, interacts with other sulfur acceptors. Pyridoxal 5'-phosphate serves as cofactor.

The protein resides in the cytoplasm. It carries out the reaction (sulfur carrier)-H + L-cysteine = (sulfur carrier)-SH + L-alanine. Its pathway is cofactor biosynthesis; iron-sulfur cluster biosynthesis. Functionally, master enzyme that delivers sulfur to a number of partners involved in Fe-S cluster assembly, tRNA modification or cofactor biosynthesis. Catalyzes the removal of elemental sulfur atoms from cysteine to produce alanine. Functions as a sulfur delivery protein for Fe-S cluster synthesis onto IscU, an Fe-S scaffold assembly protein, as well as other S acceptor proteins. In Haemophilus ducreyi (strain 35000HP / ATCC 700724), this protein is Cysteine desulfurase IscS.